The chain runs to 443 residues: MSHTMTPSEIVSELDKHIIGQNKAKKAVAVALRNRWRRQQVAEPLRQEITPKNILMIGPTGVGKTEIARRLAKLADAPFIKIEATKFTEVGYVGRDVDTIVRDLAEMAIKQTRESEMKKVRTKAEDAAEDRLLDVLLPPPRDIGFSQPEEKDSNTRQVFRKKLREGQLDDKDIELEVSAGMPSMDIMGPPGMEDMTEQIRTMFAGLGQGKKARRKMKVKEAFKLLIDEEAAKLVNDEELKHKAIANVEQNGIVFLDEIDKIASRSDIGGGEVSRQGVQRDLLPLVEGTTVNTKYGMIKTDHILFIASGAFHLSKPSDLIPELQGRFPIRVELESLSVQDFEAILTQTDASLTKQYQALLNTEEVNLVFAPDGIRRLAEIAFSVNEKVENIGARRLYTVMERLLEDLSFHASKSSGETVTIDAAYVEERLGDLAGNEDLSRYVL.

ATP-binding positions include I19 and 61–66; that span reads GVGKTE. The tract at residues 139–158 is disordered; that stretch reads PPRDIGFSQPEEKDSNTRQV. ATP is bound by residues D256, E321, and R393.

Belongs to the ClpX chaperone family. HslU subfamily. In terms of assembly, a double ring-shaped homohexamer of HslV is capped on each side by a ring-shaped HslU homohexamer. The assembly of the HslU/HslV complex is dependent on binding of ATP.

Its subcellular location is the cytoplasm. In terms of biological role, ATPase subunit of a proteasome-like degradation complex; this subunit has chaperone activity. The binding of ATP and its subsequent hydrolysis by HslU are essential for unfolding of protein substrates subsequently hydrolyzed by HslV. HslU recognizes the N-terminal part of its protein substrates and unfolds these before they are guided to HslV for hydrolysis. This is ATP-dependent protease ATPase subunit HslU from Cupriavidus taiwanensis (strain DSM 17343 / BCRC 17206 / CCUG 44338 / CIP 107171 / LMG 19424 / R1) (Ralstonia taiwanensis (strain LMG 19424)).